The chain runs to 332 residues: Phospho-N-acetylmuramoyl-pentapeptide-transferase (332 aa).

Transmembrane regions (helical) follow at residues 9 to 29 (IYTIIIGFFITLILGPLIIPF), 55 to 75 (TIGGLIIIASVLVTSFTAGLI), 79 to 99 (LWVAIGAMVAFGLIGFIDDFI), 115 to 135 (MSLQIIVAVFLAIYQSNISVM), 155 to 175 (IPQYLDLGILYIPFIVFVVVA), 196 to 216 (IVAAFFSILAMEWGYPSLAIF), 253 to 273 (AVAILMNVALIVPIVGGIYFA), and 312 to 332 (VVIVFWIVTVILCLIGMLGLN).

It belongs to the glycosyltransferase 4 family. MraY subfamily. It depends on Mg(2+) as a cofactor.

Its subcellular location is the cell membrane. The catalysed reaction is UDP-N-acetyl-alpha-D-muramoyl-L-alanyl-gamma-D-glutamyl-meso-2,6-diaminopimeloyl-D-alanyl-D-alanine + di-trans,octa-cis-undecaprenyl phosphate = di-trans,octa-cis-undecaprenyl diphospho-N-acetyl-alpha-D-muramoyl-L-alanyl-D-glutamyl-meso-2,6-diaminopimeloyl-D-alanyl-D-alanine + UMP. The protein operates within cell wall biogenesis; peptidoglycan biosynthesis. Functionally, catalyzes the initial step of the lipid cycle reactions in the biosynthesis of the cell wall peptidoglycan: transfers peptidoglycan precursor phospho-MurNAc-pentapeptide from UDP-MurNAc-pentapeptide onto the lipid carrier undecaprenyl phosphate, yielding undecaprenyl-pyrophosphoryl-MurNAc-pentapeptide, known as lipid I. This chain is Phospho-N-acetylmuramoyl-pentapeptide-transferase, found in Alkaliphilus oremlandii (strain OhILAs) (Clostridium oremlandii (strain OhILAs)).